Reading from the N-terminus, the 381-residue chain is MTQPAIRYELLHTCKQTGARLGIVHTPHGSFETPAFMPVGTQATVKTMSPEELKEMNAGIILSNTYHLWLRPGNDIVKEAGGLHKFMNWDRPILTDSGGFQVFSLSQFRKIEEEGVHFRNHLNGDKLFLSPEKAMEIQNDLGSDIMMAFDECPPYPATHEYMLQSVDRTTRWAKRCKEAHSRPEEQGLFGIIQGGEYEDLRRRSAEALVELDFPGYAIGGLSVGEPKDIMNRVLEFTTPLMPANKPRYLMGVGSPDSLIDGAIRGVDMFDCVLPTRIARNGTLMTSEGRLVVKNAKYARDFGPIDPNCDCYTCKNYSRAYIRHLIRTEETFGIRLTSYHNLHFLLKLMEQVREAIRQDRLGDFREEFFEKYGFNGPNAKNF.

Residue Asp-96 is the Proton acceptor of the active site. Substrate contacts are provided by residues 96-100 (DSGGF), Asp-150, Gln-193, and Gly-220. Residues 251 to 257 (GVGSPDS) form an RNA binding region. Residue Asp-270 is the Nucleophile of the active site. Residues 275 to 279 (TRIAR) form an RNA binding; important for wobble base 34 recognition region. Positions 308, 310, 313, and 339 each coordinate Zn(2+).

The protein belongs to the queuine tRNA-ribosyltransferase family. Homodimer. Within each dimer, one monomer is responsible for RNA recognition and catalysis, while the other monomer binds to the replacement base PreQ1. It depends on Zn(2+) as a cofactor.

The catalysed reaction is 7-aminomethyl-7-carbaguanine + guanosine(34) in tRNA = 7-aminomethyl-7-carbaguanosine(34) in tRNA + guanine. Its pathway is tRNA modification; tRNA-queuosine biosynthesis. Catalyzes the base-exchange of a guanine (G) residue with the queuine precursor 7-aminomethyl-7-deazaguanine (PreQ1) at position 34 (anticodon wobble position) in tRNAs with GU(N) anticodons (tRNA-Asp, -Asn, -His and -Tyr). Catalysis occurs through a double-displacement mechanism. The nucleophile active site attacks the C1' of nucleotide 34 to detach the guanine base from the RNA, forming a covalent enzyme-RNA intermediate. The proton acceptor active site deprotonates the incoming PreQ1, allowing a nucleophilic attack on the C1' of the ribose to form the product. After dissociation, two additional enzymatic reactions on the tRNA convert PreQ1 to queuine (Q), resulting in the hypermodified nucleoside queuosine (7-(((4,5-cis-dihydroxy-2-cyclopenten-1-yl)amino)methyl)-7-deazaguanosine). This Lysinibacillus sphaericus (strain C3-41) protein is Queuine tRNA-ribosyltransferase.